The primary structure comprises 374 residues: Heme A synthase (374 aa).

The tract at residues 1–22 is disordered; the sequence is MSDHIRAASSPSRHGSEHGWQH. Transmembrane regions (helical) follow at residues 32–52, 118–138, 149–169, 184–204, and 226–246; these read ILVATWMFTLCFMILVMVMLG, RLWGRLIGLVLLLPLIFLAVT, LILIFVLGGLQGAVGWFMVAS, VVHLSFALLLYSALLWTALSV, and LGLVCITIIAGGFVAGIHAGL. A heme-binding site is contributed by H281. The next 3 helical transmembrane spans lie at 283-300, 309-329, and 332-352; these read LLATLTALTALLTGLIGF, AVLPLMVAVILQYALGIATLL, and VAVPVAVVHQGMAVLLLTAAI. Residue H340 participates in heme binding.

This sequence belongs to the COX15/CtaA family. Type 2 subfamily. In terms of assembly, interacts with CtaB. It depends on heme b as a cofactor.

It localises to the cell membrane. It carries out the reaction Fe(II)-heme o + 2 A + H2O = Fe(II)-heme a + 2 AH2. The protein operates within porphyrin-containing compound metabolism; heme A biosynthesis; heme A from heme O: step 1/1. Catalyzes the conversion of heme O to heme A by two successive hydroxylations of the methyl group at C8. The first hydroxylation forms heme I, the second hydroxylation results in an unstable dihydroxymethyl group, which spontaneously dehydrates, resulting in the formyl group of heme A. The protein is Heme A synthase of Granulibacter bethesdensis (strain ATCC BAA-1260 / CGDNIH1).